The following is a 210-amino-acid chain: Glycerol-3-phosphate acyltransferase 2 (210 aa).

Transmembrane regions (helical) follow at residues 4 to 24, 54 to 74, 82 to 102, 114 to 134, 141 to 161, and 163 to 183; these read LIMV…PAPY, FWPG…AMAV, LGIQ…PVWL, IGIL…CFLV, FPTL…WLGQ, and DLGK…MYIP.

It belongs to the PlsY family. As to quaternary structure, probably interacts with PlsX.

It is found in the cell membrane. The enzyme catalyses an acyl phosphate + sn-glycerol 3-phosphate = a 1-acyl-sn-glycero-3-phosphate + phosphate. It participates in lipid metabolism; phospholipid metabolism. Catalyzes the transfer of an acyl group from acyl-phosphate (acyl-PO(4)) to glycerol-3-phosphate (G3P) to form lysophosphatidic acid (LPA). This enzyme utilizes acyl-phosphate as fatty acyl donor, but not acyl-CoA or acyl-ACP. The polypeptide is Glycerol-3-phosphate acyltransferase 2 (Dehalococcoides mccartyi (strain ATCC BAA-2266 / KCTC 15142 / 195) (Dehalococcoides ethenogenes (strain 195))).